The sequence spans 376 residues: Erythronate-4-phosphate dehydrogenase (376 aa).

Substrate-binding residues include S45 and T67. NAD(+) is bound at residue D147. The active site involves R209. Position 233 (D233) interacts with NAD(+). The active site involves E238. H255 acts as the Proton donor in catalysis. G258 provides a ligand contact to NAD(+). Y259 lines the substrate pocket.

The protein belongs to the D-isomer specific 2-hydroxyacid dehydrogenase family. PdxB subfamily. Homodimer.

It localises to the cytoplasm. The enzyme catalyses 4-phospho-D-erythronate + NAD(+) = (R)-3-hydroxy-2-oxo-4-phosphooxybutanoate + NADH + H(+). The protein operates within cofactor biosynthesis; pyridoxine 5'-phosphate biosynthesis; pyridoxine 5'-phosphate from D-erythrose 4-phosphate: step 2/5. In terms of biological role, catalyzes the oxidation of erythronate-4-phosphate to 3-hydroxy-2-oxo-4-phosphonooxybutanoate. The chain is Erythronate-4-phosphate dehydrogenase from Shewanella halifaxensis (strain HAW-EB4).